A 140-amino-acid chain; its full sequence is Ribonuclease P protein component (140 aa).

The protein belongs to the RnpA family. Consists of a catalytic RNA component (M1 or rnpB) and a protein subunit.

The catalysed reaction is Endonucleolytic cleavage of RNA, removing 5'-extranucleotides from tRNA precursor.. Functionally, RNaseP catalyzes the removal of the 5'-leader sequence from pre-tRNA to produce the mature 5'-terminus. It can also cleave other RNA substrates such as 4.5S RNA. The protein component plays an auxiliary but essential role in vivo by binding to the 5'-leader sequence and broadening the substrate specificity of the ribozyme. The protein is Ribonuclease P protein component of Nostoc sp. (strain PCC 7120 / SAG 25.82 / UTEX 2576).